The chain runs to 697 residues: ATP-dependent zinc metalloprotease FtsH (697 aa).

The disordered stretch occupies residues methionine 1–leucine 23. Topologically, residues methionine 1–arginine 29 are cytoplasmic. The chain crosses the membrane as a helical span at residues phenylalanine 30–tryptophan 50. The Periplasmic portion of the chain corresponds to threonine 51 to tryptophan 158. A helical membrane pass occupies residues phenylalanine 159 to leucine 179. The Cytoplasmic segment spans residues leucine 180–proline 697. Glycine 251–threonine 258 provides a ligand contact to ATP. Residue histidine 474 participates in Zn(2+) binding. The active site involves glutamate 475. Positions 478 and 550 each coordinate Zn(2+). Residues glycine 649–proline 697 are disordered. Basic and acidic residues predominate over residues lysine 662–lysine 672.

The protein in the central section; belongs to the AAA ATPase family. In the C-terminal section; belongs to the peptidase M41 family. As to quaternary structure, homohexamer. It depends on Zn(2+) as a cofactor.

It localises to the cell inner membrane. Functionally, acts as a processive, ATP-dependent zinc metallopeptidase for both cytoplasmic and membrane proteins. Plays a role in the quality control of integral membrane proteins. In Rhodothermus marinus (strain ATCC 43812 / DSM 4252 / R-10) (Rhodothermus obamensis), this protein is ATP-dependent zinc metalloprotease FtsH.